We begin with the raw amino-acid sequence, 164 residues long: Anterior gradient protein 2 (164 aa).

The signal sequence occupies residues methionine 1–alanine 20. 2 short sequence motifs (homodimer stabilization; interchain) span residues serine 34 to tryptophan 43 and glutamate 49 to threonine 56.

It belongs to the AGR family. In terms of assembly, monomer and homodimer.

The protein resides in the secreted. It is found in the endoplasmic reticulum. The chain is Anterior gradient protein 2 from Xenopus tropicalis (Western clawed frog).